A 333-amino-acid chain; its full sequence is MAKMYYDSDASLELLQGKTIAVMGYGSQGHAQAQNLKDSGLNVVIGLRADSRRWKQAEAAGLKVATVAEAAAQADLIQILLPDERQASVYEKEIKPHLTAGKCLVFSHGFNIHFGQIVPPADVDVFMVAPKSPGHLVRRTYEEGAGVPGLIAVHQDASGRAYDLALAYAKGIGCTRAGVLETTFKEETETDLFGEQAVLCGGVSELIRAGFDTLVEAGYQPESAYFECLHELKLIVDLIYEGGISRMRYSISDTAEYGDMMIGKRIITDETRKEMKKVLAEIQDGTFAKNWLLENQINRPSFNAIERKDAEHPIEKVGAELRAMMPFIKKPGE.

A KARI N-terminal Rossmann domain is found at 2–182 (AKMYYDSDAS…GCTRAGVLET (181 aa)). NADP(+)-binding positions include 25–28 (YGSQ), Arg-48, Ser-51, and 83–86 (DERQ). The active site involves His-108. Gly-134 serves as a coordination point for NADP(+). Positions 183–328 (TFKEETETDL…AELRAMMPFI (146 aa)) constitute a KARI C-terminal knotted domain. Mg(2+) is bound by residues Asp-191, Glu-195, Glu-227, and Glu-231. Position 252 (Ser-252) interacts with substrate.

Belongs to the ketol-acid reductoisomerase family. It depends on Mg(2+) as a cofactor.

It catalyses the reaction (2R)-2,3-dihydroxy-3-methylbutanoate + NADP(+) = (2S)-2-acetolactate + NADPH + H(+). It carries out the reaction (2R,3R)-2,3-dihydroxy-3-methylpentanoate + NADP(+) = (S)-2-ethyl-2-hydroxy-3-oxobutanoate + NADPH + H(+). The protein operates within amino-acid biosynthesis; L-isoleucine biosynthesis; L-isoleucine from 2-oxobutanoate: step 2/4. Its pathway is amino-acid biosynthesis; L-valine biosynthesis; L-valine from pyruvate: step 2/4. Its function is as follows. Involved in the biosynthesis of branched-chain amino acids (BCAA). Catalyzes an alkyl-migration followed by a ketol-acid reduction of (S)-2-acetolactate (S2AL) to yield (R)-2,3-dihydroxy-isovalerate. In the isomerase reaction, S2AL is rearranged via a Mg-dependent methyl migration to produce 3-hydroxy-3-methyl-2-ketobutyrate (HMKB). In the reductase reaction, this 2-ketoacid undergoes a metal-dependent reduction by NADPH to yield (R)-2,3-dihydroxy-isovalerate. This Desulfitobacterium hafniense (strain DSM 10664 / DCB-2) protein is Ketol-acid reductoisomerase (NADP(+)).